Consider the following 1404-residue polypeptide: ABC transporter G family member 47 (1404 aa).

Positions 156–423 (GNALHITRKK…FQSIGFKCPE (268 aa)) constitute an ABC transporter 1 domain. An ATP-binding site is contributed by 189–196 (GPPGSGKT). The ABC transmembrane type-2 1 domain occupies 501-714 (ELLQANIDRE…ALNTLAVNEF (214 aa)). A run of 7 helical transmembrane segments spans residues 519 to 539 (FLYI…MTVF), 565 to 585 (MIMF…PVFF), 607 to 627 (TPIS…VIGF), 638 to 658 (FLAL…IASL), 663 to 683 (VVAS…SGFI), 692 to 712 (WWIW…LAVN), and 751 to 771 (VGAL…CLIF). An ABC transporter 2 domain is found at 808–1059 (ITFEDIKYSI…ELIRYFEAIE (252 aa)). 852-859 (GVSGAGKT) contributes to the ATP binding site. In terms of domain architecture, ABC transmembrane type-2 2 spans 1132-1346 (TQCLACLWKQ…TLNGLVTSQF (215 aa)). 7 helical membrane passes run 1152 to 1172 (IAVK…MFWG), 1183 to 1199 (LFSA…TMGV), 1239 to 1259 (LPYI…MIGY), 1266 to 1286 (FFWY…YGMM), 1298 to 1318 (TVVS…LIPL), 1321 to 1341 (IPIW…LNGL), and 1373 to 1393 (LLWV…FLFG).

This sequence belongs to the ABC transporter superfamily. ABCG family. PDR (TC 3.A.1.205) subfamily.

The protein localises to the membrane. In terms of biological role, may be a general defense protein. This chain is ABC transporter G family member 47, found in Oryza sativa subsp. japonica (Rice).